A 212-amino-acid polypeptide reads, in one-letter code: Peptide methionine sulfoxide reductase MsrA (212 aa).

Cysteine 52 is a catalytic residue.

Belongs to the MsrA Met sulfoxide reductase family.

It carries out the reaction L-methionyl-[protein] + [thioredoxin]-disulfide + H2O = L-methionyl-(S)-S-oxide-[protein] + [thioredoxin]-dithiol. The enzyme catalyses [thioredoxin]-disulfide + L-methionine + H2O = L-methionine (S)-S-oxide + [thioredoxin]-dithiol. Has an important function as a repair enzyme for proteins that have been inactivated by oxidation. Catalyzes the reversible oxidation-reduction of methionine sulfoxide in proteins to methionine. This chain is Peptide methionine sulfoxide reductase MsrA, found in Escherichia coli O127:H6 (strain E2348/69 / EPEC).